Here is a 458-residue protein sequence, read N- to C-terminus: NADH-quinone oxidoreductase subunit N (458 aa).

Helical transmembrane passes span 2 to 22, 30 to 50, 62 to 82, 94 to 114, 118 to 138, 153 to 173, 194 to 214, 235 to 255, 261 to 281, 290 to 310, 318 to 338, 361 to 381, 397 to 417, and 438 to 458; these read LLLLPEITLTLIALLGQFFAV, IISNIIILLCILSIFLTFKYS, GINIGISKSIVLLFTIISMII, LKFEFITLMLLSVVGIFVAIS, FLLLFCGMELTALTSYALAGF, FILGSLVSCLSLFGISFIYGF, LGLIIGIILFLSSIFFKLSSV, FNAASKIGMVIVLLNISKLII, INYNLIKIIAILSMLFGAFGA, LMAYSTILNIGYVLIGVLLHN, LLYMLIYAVGSIGFFTCLIIL, IAAVISIVMFSMIGIPPLTGF, FALAYCGIFTSVVAAFYYLKV, and LLLINYLVVGFLLLGSFIISF.

Belongs to the complex I subunit 2 family. NDH-1 is composed of 14 different subunits. Subunits NuoA, H, J, K, L, M, N constitute the membrane sector of the complex.

The protein resides in the cell inner membrane. It carries out the reaction a quinone + NADH + 5 H(+)(in) = a quinol + NAD(+) + 4 H(+)(out). Its function is as follows. NDH-1 shuttles electrons from NADH, via FMN and iron-sulfur (Fe-S) centers, to quinones in the respiratory chain. The immediate electron acceptor for the enzyme in this species is believed to be ubiquinone. Couples the redox reaction to proton translocation (for every two electrons transferred, four hydrogen ions are translocated across the cytoplasmic membrane), and thus conserves the redox energy in a proton gradient. The polypeptide is NADH-quinone oxidoreductase subunit N (Rickettsia conorii (strain ATCC VR-613 / Malish 7)).